The chain runs to 266 residues: Thymidylate synthase (266 aa).

DUMP is bound by residues Arg-21 and 127-128 (RR). The active-site Nucleophile is Cys-147. DUMP is bound by residues 168-171 (RSAD), Asn-179, and 209-211 (HIY). Asp-171 is a binding site for (6R)-5,10-methylene-5,6,7,8-tetrahydrofolate. Ala-265 provides a ligand contact to (6R)-5,10-methylene-5,6,7,8-tetrahydrofolate.

This sequence belongs to the thymidylate synthase family. Bacterial-type ThyA subfamily. As to quaternary structure, homodimer.

The protein localises to the cytoplasm. It carries out the reaction dUMP + (6R)-5,10-methylene-5,6,7,8-tetrahydrofolate = 7,8-dihydrofolate + dTMP. The protein operates within pyrimidine metabolism; dTTP biosynthesis. Catalyzes the reductive methylation of 2'-deoxyuridine-5'-monophosphate (dUMP) to 2'-deoxythymidine-5'-monophosphate (dTMP) while utilizing 5,10-methylenetetrahydrofolate (mTHF) as the methyl donor and reductant in the reaction, yielding dihydrofolate (DHF) as a by-product. This enzymatic reaction provides an intracellular de novo source of dTMP, an essential precursor for DNA biosynthesis. The protein is Thymidylate synthase of Brachyspira hyodysenteriae (strain ATCC 49526 / WA1).